The sequence spans 205 residues: Large ribosomal subunit protein uL4 (205 aa).

The segment at 56–78 is disordered; it reads VSGTTAKPYRQKHTGRARQGSLR.

Belongs to the universal ribosomal protein uL4 family. Part of the 50S ribosomal subunit.

Its function is as follows. One of the primary rRNA binding proteins, this protein initially binds near the 5'-end of the 23S rRNA. It is important during the early stages of 50S assembly. It makes multiple contacts with different domains of the 23S rRNA in the assembled 50S subunit and ribosome. Functionally, forms part of the polypeptide exit tunnel. The chain is Large ribosomal subunit protein uL4 from Ehrlichia ruminantium (strain Gardel).